Here is a 422-residue protein sequence, read N- to C-terminus: Dihydrolipoyllysine-residue succinyltransferase component of 2-oxoglutarate dehydrogenase complex (422 aa).

The Lipoyl-binding domain occupies methionine 1–glycine 76. At lysine 42 the chain carries N6-lipoyllysine. The disordered stretch occupies residues glutamate 77–asparagine 184. Polar residues-rich tracts occupy residues glycine 80 to glutamine 94 and asparagine 116 to proline 130. The Peripheral subunit-binding (PSBD) domain maps to asparagine 127–glutamine 163. Basic and acidic residues predominate over residues aspartate 152–glutamine 163. The segment covering glutamine 164–proline 176 has biased composition (low complexity). Catalysis depends on residues histidine 393 and aspartate 397.

Belongs to the 2-oxoacid dehydrogenase family. Forms a 24-polypeptide structural core with octahedral symmetry. Part of the 2-oxoglutarate dehydrogenase (OGDH) complex composed of E1 (2-oxoglutarate dehydrogenase), E2 (dihydrolipoamide succinyltransferase) and E3 (dihydrolipoamide dehydrogenase); the complex contains multiple copies of the three enzymatic components (E1, E2 and E3). The cofactor is (R)-lipoate.

It catalyses the reaction N(6)-[(R)-dihydrolipoyl]-L-lysyl-[protein] + succinyl-CoA = N(6)-[(R)-S(8)-succinyldihydrolipoyl]-L-lysyl-[protein] + CoA. It functions in the pathway amino-acid degradation; L-lysine degradation via saccharopine pathway; glutaryl-CoA from L-lysine: step 6/6. E2 component of the 2-oxoglutarate dehydrogenase (OGDH) complex which catalyzes the second step in the conversion of 2-oxoglutarate to succinyl-CoA and CO(2). This is Dihydrolipoyllysine-residue succinyltransferase component of 2-oxoglutarate dehydrogenase complex (odhB) from Staphylococcus aureus (strain Mu50 / ATCC 700699).